The following is a 152-amino-acid chain: NAD(P)H-quinone oxidoreductase subunit N (152 aa).

This sequence belongs to the complex I NdhN subunit family. NDH-1 can be composed of about 15 different subunits; different subcomplexes with different compositions have been identified which probably have different functions.

It is found in the cellular thylakoid membrane. It catalyses the reaction a plastoquinone + NADH + (n+1) H(+)(in) = a plastoquinol + NAD(+) + n H(+)(out). It carries out the reaction a plastoquinone + NADPH + (n+1) H(+)(in) = a plastoquinol + NADP(+) + n H(+)(out). Functionally, NDH-1 shuttles electrons from an unknown electron donor, via FMN and iron-sulfur (Fe-S) centers, to quinones in the respiratory and/or the photosynthetic chain. The immediate electron acceptor for the enzyme in this species is believed to be plastoquinone. Couples the redox reaction to proton translocation, and thus conserves the redox energy in a proton gradient. Cyanobacterial NDH-1 also plays a role in inorganic carbon-concentration. The polypeptide is NAD(P)H-quinone oxidoreductase subunit N (Prochlorococcus marinus (strain SARG / CCMP1375 / SS120)).